A 247-amino-acid chain; its full sequence is Ras-like protein family member 11B (247 aa).

Residues 29-247 form a small GTPase-like region; it reads ASSRVIKIAV…SAKVRTATSV (219 aa). Residues 40–47, 87–91, and 152–155 each bind GTP; these read GGSGVGKT, DTPGV, and NKAD. The tract at residues 205–228 is disordered; that stretch reads QNTGTPERRKNSLIPRPKSPNMQD.

This sequence belongs to the small GTPase superfamily. Ras family.

It carries out the reaction GTP + H2O = GDP + phosphate + H(+). The chain is Ras-like protein family member 11B from Xenopus tropicalis (Western clawed frog).